The following is a 376-amino-acid chain: tRNA-specific 2-thiouridylase MnmA (376 aa).

Residues 14-21 and methionine 40 each bind ATP; that span reads GMSGGVDS. The segment at 100–102 is interaction with target base in tRNA; that stretch reads NPD. Catalysis depends on cysteine 105, which acts as the Nucleophile. The cysteines at positions 105 and 202 are disulfide-linked. Glycine 129 serves as a coordination point for ATP. Residues 152-154 form an interaction with tRNA region; sequence KDQ. The active-site Cysteine persulfide intermediate is cysteine 202. An interaction with tRNA region spans residues 315-316; that stretch reads RY.

Belongs to the MnmA/TRMU family.

The protein resides in the cytoplasm. It carries out the reaction S-sulfanyl-L-cysteinyl-[protein] + uridine(34) in tRNA + AH2 + ATP = 2-thiouridine(34) in tRNA + L-cysteinyl-[protein] + A + AMP + diphosphate + H(+). Catalyzes the 2-thiolation of uridine at the wobble position (U34) of tRNA, leading to the formation of s(2)U34. This Lactococcus lactis subsp. cremoris (strain SK11) protein is tRNA-specific 2-thiouridylase MnmA.